The following is a 174-amino-acid chain: Small hydrophobic protein (174 aa).

The chain crosses the membrane as a helical span at residues 33–53 (VAVICAILALIFLVATIGLSV). Residue Asn-165 is glycosylated (N-linked (GlcNAc...) asparagine; by host).

The protein localises to the membrane. In Meleagris gallopavo (Wild turkey), this protein is Small hydrophobic protein (SH).